The sequence spans 455 residues: tRNA modification GTPase MnmE (455 aa).

Positions 26, 86, and 125 each coordinate (6S)-5-formyl-5,6,7,8-tetrahydrofolate. Residues 222–376 (GLKTAIIGRP…VEEKINQIFF (155 aa)) form the TrmE-type G domain. Residue Asn-232 coordinates K(+). GTP is bound by residues 232-237 (NVGKSS), 251-257 (TDIAGTT), and 276-279 (DTAG). Mg(2+) is bound at residue Ser-236. Residues Thr-251, Ile-253, and Thr-256 each contribute to the K(+) site. Position 257 (Thr-257) interacts with Mg(2+). Lys-455 contacts (6S)-5-formyl-5,6,7,8-tetrahydrofolate.

Belongs to the TRAFAC class TrmE-Era-EngA-EngB-Septin-like GTPase superfamily. TrmE GTPase family. In terms of assembly, homodimer. Heterotetramer of two MnmE and two MnmG subunits. K(+) serves as cofactor.

It localises to the cytoplasm. Exhibits a very high intrinsic GTPase hydrolysis rate. Involved in the addition of a carboxymethylaminomethyl (cmnm) group at the wobble position (U34) of certain tRNAs, forming tRNA-cmnm(5)s(2)U34. The sequence is that of tRNA modification GTPase MnmE from Lactococcus lactis subsp. cremoris (strain MG1363).